Consider the following 321-residue polypeptide: D-alanine--D-alanine ligase (321 aa).

Residues 103–303 (KKILTPENIP…YVALCRMIVE (201 aa)) form the ATP-grasp domain. Position 129–186 (129–186 (PLPRPYVLKPVNEGSSVGVAIIDESFNDGQPIRKDQIDPWKNFKTLLAEPFIKGRELT)) interacts with ATP. 3 residues coordinate Mg(2+): aspartate 254, glutamate 270, and asparagine 272.

The protein belongs to the D-alanine--D-alanine ligase family. Mg(2+) serves as cofactor. The cofactor is Mn(2+).

Its subcellular location is the cytoplasm. It catalyses the reaction 2 D-alanine + ATP = D-alanyl-D-alanine + ADP + phosphate + H(+). The protein operates within cell wall biogenesis; peptidoglycan biosynthesis. Functionally, cell wall formation. In Zymomonas mobilis subsp. mobilis (strain ATCC 31821 / ZM4 / CP4), this protein is D-alanine--D-alanine ligase.